The following is a 74-amino-acid chain: uncharacterized protein (74 aa).

A helical membrane pass occupies residues 8–30; the sequence is LAAAVSSSAASAGVSRIAASAMA.

Its subcellular location is the mitochondrion outer membrane. This is an uncharacterized protein from Saccharomyces cerevisiae (strain ATCC 204508 / S288c) (Baker's yeast).